We begin with the raw amino-acid sequence, 146 residues long: U1 small nuclear ribonucleoprotein C (146 aa).

The Matrin-type zinc-finger motif lies at 4-36; the sequence is YYCDYCDTYLTHDSPSVRKTHCTGRKHRDNVKF. Positions 64-96 are disordered; sequence NNPFAGGPSSAPPKPSGVSIPPPNMGAPPRPGM. Positions 73-96 are enriched in pro residues; sequence SAPPKPSGVSIPPPNMGAPPRPGM.

It belongs to the U1 small nuclear ribonucleoprotein C family. In terms of assembly, U1 snRNP is composed of the 7 core Sm proteins B/B', D1, D2, D3, E, F and G that assemble in a heptameric protein ring on the Sm site of the small nuclear RNA to form the core snRNP, and at least 3 U1 snRNP-specific proteins U1-70K, U1-A and U1-C. U1-C interacts with U1 snRNA and the 5' splice-site region of the pre-mRNA.

Its subcellular location is the nucleus. Its function is as follows. Component of the spliceosomal U1 snRNP, which is essential for recognition of the pre-mRNA 5' splice-site and the subsequent assembly of the spliceosome. U1-C is directly involved in initial 5' splice-site recognition for both constitutive and regulated alternative splicing. The interaction with the 5' splice-site seems to precede base-pairing between the pre-mRNA and the U1 snRNA. Stimulates commitment or early (E) complex formation by stabilizing the base pairing of the 5' end of the U1 snRNA and the 5' splice-site region. The sequence is that of U1 small nuclear ribonucleoprotein C from Drosophila pseudoobscura pseudoobscura (Fruit fly).